The sequence spans 22 residues: Antimicrobial peptide 5 (22 aa).

Leucine 22 bears the Leucine amide mark.

In terms of tissue distribution, skin.

The protein resides in the secreted. Functionally, has very strong antimicrobial activity against Gram-positive bacterium S.aureus, Gram-negative bacterium E.coli and yeast C.albicans. Has strong hemolytic activity against human red blood cells. The protein is Antimicrobial peptide 5 of Xenopus tropicalis (Western clawed frog).